The chain runs to 482 residues: Histone deacetylase 1 (482 aa).

Positions 9-321 (RKVCYYYDGD…WTYETAVALD (313 aa)) are histone deacetylase. 2 residues coordinate 1D-myo-inositol 1,4,5,6-tetrakisphosphate: Gly27 and Lys31. Position 74 is an N6-acetyllysine; alternate (Lys74). Residue Lys74 forms a Glycyl lysine isopeptide (Lys-Gly) (interchain with G-Cter in SUMO2); alternate linkage. His141 is a catalytic residue. The Zn(2+) site is built by Asp176 and His178. The residue at position 220 (Lys220) is an N6-acetyllysine. The residue at position 261 (Cys261) is an S-nitrosocysteine. Asp264 is a Zn(2+) binding site. Arg270 lines the 1D-myo-inositol 1,4,5,6-tetrakisphosphate pocket. The residue at position 273 (Cys273) is an S-nitrosocysteine. Acidic residues predominate over residues 390-400 (PEESGDEDEDD). A disordered region spans residues 390–482 (PEESGDEDED…KGVKEEVKLA (93 aa)). A phosphoserine mark is found at Ser393, Ser406, and Ser409. Over residues 401 to 416 (PDKRISICSSDKRIAC) the composition is skewed to basic and acidic residues. Acidic residues predominate over residues 417 to 427 (EEEFSDSEEEG). Ser421 and Ser423 each carry phosphoserine; by CK2. Lys432 carries the post-translational modification N6-methylated lysine; by EHMT2. A Glycyl lysine isopeptide (Lys-Gly) (interchain with G-Cter in SUMO2) cross-link involves residue Lys438. The segment covering 443–482 (VKTEDEKEKDPEEKKEVTEEEKTKEEKPEAKGVKEEVKLA) has biased composition (basic and acidic residues). Lys444 participates in a covalent cross-link: Glycyl lysine isopeptide (Lys-Gly) (interchain with G-Cter in SUMO2); alternate. Residue Lys444 forms a Glycyl lysine isopeptide (Lys-Gly) (interchain with G-Cter in SUMO); alternate linkage. Glycyl lysine isopeptide (Lys-Gly) (interchain with G-Cter in SUMO2) cross-links involve residues Lys456, Lys457, and Lys473. A Glycyl lysine isopeptide (Lys-Gly) (interchain with G-Cter in SUMO2); alternate cross-link involves residue Lys476. Lys476 is covalently cross-linked (Glycyl lysine isopeptide (Lys-Gly) (interchain with G-Cter in SUMO); alternate). Residue Lys480 forms a Glycyl lysine isopeptide (Lys-Gly) (interchain with G-Cter in SUMO2) linkage.

The protein belongs to the histone deacetylase family. HD type 1 subfamily. As to quaternary structure, part of the core histone deacetylase (HDAC) complex composed of HDAC1, HDAC2, RBBP4 and RBBP7, the core complex associates with SIN3, SAP18 and SAP30 to form the SIN3 HDAC complex. Component of the nucleosome remodeling and deacetylase (NuRD) repressor complex, composed of core proteins MTA1, MTA2, MTA3, RBBP4, RBBP7, HDAC1, HDAC2, MBD2, MBD3, and peripherally associated proteins CDK2AP1, CDK2AP2, GATAD2A, GATAD2B, CHD3, CHD4 and CHD5. The exact stoichiometry of the NuRD complex is unknown, and some subunits such as MBD2 and MBD3, GATAD2A and GATAD2B, and CHD3, CHD4 and CHD5 define mutually exclusive NuRD complexes. Component of a BHC histone deacetylase complex that contains HDAC1, HDAC2, HMG20B/BRAF35, KDM1A, RCOR1/CoREST and PHF21A/BHC80. The BHC complex may also contain ZMYM2, ZNF217, ZMYM3, GSE1 and GTF2I. Component of a mSin3A corepressor complex that contains SIN3A, SAP130, SUDS3/SAP45, ARID4B/SAP180, HDAC1 and HDAC2. Component of the SIN3B complex, which includes SIN3B, HDAC1, PHF12 and MORF4L1. Found in a trimeric complex with APBB1 and TSHZ3; the interaction between HDAC1 and APBB1 is mediated by TSHZ3. Forms a complex comprising APPL1, RUVBL2, APPL2, CTNNB1 and HDAC2. Component of a RCOR/GFI/KDM1A/HDAC complex. Part of a complex composed of TRIM28, HDAC1, HDAC2 and EHMT2. Part of a complex containing at least CDYL, MIER1, MIER2, HDAC1 and HDAC2. The large PER complex involved in the histone deacetylation is composed of at least HDAC1, PER2, SFPQ and SIN3A. Associates with the 9-1-1 complex; interacts with HUS1. Found in a complex with DNMT3A and HDAC7. Found in a complex with YY1, SIN3A and GON4L. Identified in a histone deacetylase complex that contains DNTTIP1, HDAC1 and MIDEAS; this complex assembles into a tetramer that contains four copies of each protein chain. Found in a complex composed of at least SINHCAF, SIN3A, HDAC1, SAP30, RBBP4, OGT and TET1. Interacts with GFI1; the interaction is direct. Interacts directly with GFI1B. Interacts with TSHZ3 (via N-terminus); the interaction is direct. Interacts with APEX1; the interaction is not dependent on the acetylated status of APEX1. Interacts with BANP. Interacts with BAZ2A/TIP5. Interacts with BCL6. Interacts with BCOR. Interacts with BHLHE40/DEC1. Interacts with BRCC3; this interaction is enhanced in the presence of PWWP2B. Interacts with BRMS1. Interacts with BRMS1L. Interacts with C10orf90/FATS (via its N-terminal); the interaction prevents binding of HDAC1 to CDKN1A/p21 and facilitates the acetylation and stabilization of CDKN1A/p21. Interacts with CBFA2T3. Interacts with CCAR2. Interacts with CDK2AP1. Interacts with CHD3. Interacts with CHD4. Interacts with CHFR. Interacts with CIART. Interacts with CDKN1A/p21. Interacts with CDK5 complexed to CDK5R1 (p25). Interacts with CRY1. Interacts with DAXX. Interacts with DDIT3/CHOP. Interacts with DDX5. Interacts with DHX36; this interaction occurs in a RNA-dependent manner. Interacts with DNMT1. Interacts with DNTTIP1. Interacts with E4F1. Interacts with EP300. Interacts with ERCC6. Interacts with GATAD2A. Interacts with HCFC1. Interacts with HDAC9. Interacts with HUS1. Interacts with INSM1. Interacts with KDM4A. Interacts with KDM5A; this interaction impairs histone deacetylation. Interacts with KDM5B. Interacts with KLF1. Interacts with MBD3L2. Interacts with MIER1. Interacts with NFE4. Interacts with NR4A2/NURR1. Interacts with NR1D2 (via C-terminus). Interacts with NRIP1. Interacts with NSD2. Interacts with PACS2. Interacts with PHB2. Interacts with PPHLN1. Interacts with PRDM6. Interacts with PRDM16. Interacts with PWWP2A in a MTA1-dependent manner. Interacts with PWWP2B. Interacts with RB1. Interacts with RERE. Interacts with SANBR (via the BTB domain). Interacts with SAMSN1. Interacts with SAP30L. Interacts with SETDB1. Interacts with SIN3A. Interacts with SMAD3. Interacts with SMAD4; positively regulated by ZBTB7A. Interacts with SMARCAD1. Interacts with SMARCA4/BRG1. Interacts with SMYD2. Interacts with SMYD4 (via MYND-type zinc finger). Interacts with SP1; the interaction deacetylates SP1 and regulates its transcriptional activity. Interacts with SP3; the interaction deacetylates SP3 and regulates its transcriptional activity. In vitro, C(18) ceramides increase this interaction and the subsequent SP3 deacetylation and SP3-mediated repression of the TERT promoter. Interacts with SPEN/MINT. Interacts with SPHK2. Interacts with SUV39H1. Interacts with TGIF. Interacts with TGIF2. Interacts with TRAF6. Interacts with TRIM28; the interaction recruits HDAC1 to E2F1 and inhibits its acetylation. Interacts with TSC22D3 isoform 1; this interaction affects HDAC1 activity on MYOG promoter and thus inhibits MYOD1 transcriptional activity. Interacts with UHRF1. Interacts with UHRF2. Interacts with ZBTB7A. Interacts with ZMYND8. Interacts with ZMYND15. Interacts with ZNF431. Interacts with ZNF516; this interaction is enhanced in the presence of PWWP2B. Interacts with ZNF541. Interacts with ZNF638. Interacts with ZNHIT1. Interacts with the non-histone region of MACROH2A1. Identified in a complex with HDAC2, KCTD19, DNTTIP1 and ZNF541. Interacts with VRK1. (Microbial infection) Interacts with SV40 large T antigen. Requires Zn(2+) as cofactor. Post-translationally, sumoylated on Lys-444 and Lys-476; which promotes enzymatic activity. Desumoylated by SENP1. Phosphorylation on Ser-421 and Ser-423 promotes enzymatic activity and interactions with NuRD and SIN3 complexes. Phosphorylated by CDK5. In terms of processing, ubiquitinated by CHFR, leading to its degradation by the proteasome. Ubiquitinated by KCTD11, leading to proteasomal degradation. In terms of tissue distribution, ubiquitous, with higher levels in heart, pancreas and testis, and lower levels in kidney and brain.

The protein localises to the nucleus. The catalysed reaction is N(6)-acetyl-L-lysyl-[histone] + H2O = L-lysyl-[histone] + acetate. It carries out the reaction N(6)-acetyl-L-lysyl-[protein] + H2O = L-lysyl-[protein] + acetate. The enzyme catalyses N(6)-(2E)-butenoyl-L-lysyl-[protein] + H2O = (2E)-2-butenoate + L-lysyl-[protein]. It catalyses the reaction N(6)-[(S)-lactoyl]-L-lysyl-[protein] + H2O = (S)-lactate + L-lysyl-[protein]. With respect to regulation, inositol tetraphosphate (1D-myo-inositol 1,4,5,6-tetrakisphosphate) may act as an intermolecular glue between HDAC1 and N-Cor repressor complex components. In terms of biological role, histone deacetylase that catalyzes the deacetylation of lysine residues on the N-terminal part of the core histones (H2A, H2B, H3 and H4). Histone deacetylation gives a tag for epigenetic repression and plays an important role in transcriptional regulation, cell cycle progression and developmental events. Histone deacetylases act via the formation of large multiprotein complexes. Acts as a component of the histone deacetylase NuRD complex which participates in the remodeling of chromatin. As part of the SIN3B complex is recruited downstream of the constitutively active genes transcriptional start sites through interaction with histones and mitigates histone acetylation and RNA polymerase II progression within transcribed regions contributing to the regulation of transcription. Also functions as a deacetylase for non-histone targets, such as NR1D2, RELA, SP1, SP3, STAT3 and TSHZ3. Deacetylates SP proteins, SP1 and SP3, and regulates their function. Component of the BRG1-RB1-HDAC1 complex, which negatively regulates the CREST-mediated transcription in resting neurons. Upon calcium stimulation, HDAC1 is released from the complex and CREBBP is recruited, which facilitates transcriptional activation. Deacetylates TSHZ3 and regulates its transcriptional repressor activity. Deacetylates 'Lys-310' in RELA and thereby inhibits the transcriptional activity of NF-kappa-B. Deacetylates NR1D2 and abrogates the effect of KAT5-mediated relieving of NR1D2 transcription repression activity. Component of a RCOR/GFI/KDM1A/HDAC complex that suppresses, via histone deacetylase (HDAC) recruitment, a number of genes implicated in multilineage blood cell development. Involved in CIART-mediated transcriptional repression of the circadian transcriptional activator: CLOCK-BMAL1 heterodimer. Required for the transcriptional repression of circadian target genes, such as PER1, mediated by the large PER complex or CRY1 through histone deacetylation. In addition to protein deacetylase activity, also has protein-lysine deacylase activity: acts as a protein decrotonylase and delactylase by mediating decrotonylation ((2E)-butenoyl) and delactylation (lactoyl) of histones, respectively. This chain is Histone deacetylase 1, found in Homo sapiens (Human).